A 543-amino-acid polypeptide reads, in one-letter code: RuBisCO large subunit-binding protein subunit alpha, chloroplastic (543 aa).

The N-terminal 2 residues, 1–2 (GA), are a transit peptide targeting the chloroplast.

The protein belongs to the chaperonin (HSP60) family. In terms of assembly, oligomer of probably six alpha and six beta subunits.

The protein localises to the plastid. The protein resides in the chloroplast. Functionally, this protein binds RuBisCO small and large subunits and is implicated in the assembly of the enzyme oligomer. This chain is RuBisCO large subunit-binding protein subunit alpha, chloroplastic, found in Triticum aestivum (Wheat).